We begin with the raw amino-acid sequence, 599 residues long: Transcription factor COE4 (599 aa).

The tract at residues 64–67 (RKSN) is interaction with DNA. The C5-type zinc finger occupies 152–171 (CRVLLTHEIMCSRCCDRKSC). Interaction with DNA regions lie at residues 198-205 (NCLKNAGN) and 237-240 (NNSK). Positions 256–339 (PCIKAISPGE…KGAPGRFVYT (84 aa)) constitute an IPT/TIG domain. 2 disordered regions span residues 449–473 (GYAR…SSYG) and 556–586 (VLRP…TDKF). Positions 464 to 473 (SPGSQQSSYG) are enriched in low complexity.

This sequence belongs to the COE family. Forms either a homodimer or a heterodimer with a related family member. In terms of tissue distribution, expressed in the olfactory epithelium, including in both neuronal and basal cell layers. Absent in the vomeronasal organ. Absent from NK cells and CD8(+) T cells.

It localises to the nucleus. Functionally, transcription factor. Positively modulates transcription, perhaps less strongly than other early B cell factor/EBF family proteins. Binds an EBF1/Olf-1 consensus site in vitro. The chain is Transcription factor COE4 (Ebf4) from Mus musculus (Mouse).